The following is a 202-amino-acid chain: Holliday junction branch migration complex subunit RuvA (202 aa).

The tract at residues 1–64 (MIGRLRGTLA…EDAQLLYGFA (64 aa)) is domain I. Residues 65 to 143 (SKRERDFFRE…AWEAVPSMFA (79 aa)) are domain II. The flexible linker stretch occupies residues 144-154 (LVPNQPDAPAP). Positions 154–202 (PVASAESDAVSALISLGYKPQEASKAVSAIKDKGLSSEDMIRRALKGMI) are domain III.

Belongs to the RuvA family. As to quaternary structure, homotetramer. Forms an RuvA(8)-RuvB(12)-Holliday junction (HJ) complex. HJ DNA is sandwiched between 2 RuvA tetramers; dsDNA enters through RuvA and exits via RuvB. An RuvB hexamer assembles on each DNA strand where it exits the tetramer. Each RuvB hexamer is contacted by two RuvA subunits (via domain III) on 2 adjacent RuvB subunits; this complex drives branch migration. In the full resolvosome a probable DNA-RuvA(4)-RuvB(12)-RuvC(2) complex forms which resolves the HJ.

It is found in the cytoplasm. Its function is as follows. The RuvA-RuvB-RuvC complex processes Holliday junction (HJ) DNA during genetic recombination and DNA repair, while the RuvA-RuvB complex plays an important role in the rescue of blocked DNA replication forks via replication fork reversal (RFR). RuvA specifically binds to HJ cruciform DNA, conferring on it an open structure. The RuvB hexamer acts as an ATP-dependent pump, pulling dsDNA into and through the RuvAB complex. HJ branch migration allows RuvC to scan DNA until it finds its consensus sequence, where it cleaves and resolves the cruciform DNA. The protein is Holliday junction branch migration complex subunit RuvA of Pseudomonas fluorescens (strain ATCC BAA-477 / NRRL B-23932 / Pf-5).